Consider the following 132-residue polypeptide: Evasin P985 (132 aa).

A signal peptide spans 1–24 (MHSTIAYVSLLPLALFVAMHGAST). N-linked (GlcNAc...) asparagine glycans are attached at residues N45, N69, N74, N103, N111, and N117. Cystine bridges form between C48–C70, C66–C109, C83–C114, and C104–C123.

Its subcellular location is the secreted. In terms of biological role, salivary chemokine-binding protein which binds to host chemokine CCL5. This chain is Evasin P985, found in Amblyomma parvum (South American tick).